Here is a 165-residue protein sequence, read N- to C-terminus: Small ribosomal subunit protein uS5 (165 aa).

Positions 10–73 (LVEKLVSVDR…EAAKRNMITV (64 aa)) constitute an S5 DRBM domain.

Belongs to the universal ribosomal protein uS5 family. In terms of assembly, part of the 30S ribosomal subunit. Contacts proteins S4 and S8.

Functionally, with S4 and S12 plays an important role in translational accuracy. In terms of biological role, located at the back of the 30S subunit body where it stabilizes the conformation of the head with respect to the body. This is Small ribosomal subunit protein uS5 from Psychrobacter sp. (strain PRwf-1).